The chain runs to 202 residues: Transmembrane 4 L6 family member 4 (202 aa).

Residues M1–C9 lie on the Cytoplasmic side of the membrane. Residues L10–F30 form a helical membrane-spanning segment. The Extracellular segment spans residues P31 to Y48. The chain crosses the membrane as a helical span at residues F49–L69. Topologically, residues Q70–T93 are cytoplasmic. The helical transmembrane segment at L94 to I114 threads the bilayer. The Extracellular portion of the chain corresponds to N115 to T158. Residue N156 is glycosylated (N-linked (GlcNAc...) asparagine). A helical transmembrane segment spans residues L159–I179. At N180–V202 the chain is on the cytoplasmic side.

It belongs to the L6 tetraspanin family. Expressed in liver and testis. Up-regulated in regenerating liver after partial hepatectomy.

Its subcellular location is the membrane. Functionally, regulates the adhesive and proliferative status of intestinal epithelial cells. Can mediate density-dependent cell proliferation. The protein is Transmembrane 4 L6 family member 4 (Tm4sf4) of Rattus norvegicus (Rat).